A 163-amino-acid chain; its full sequence is Endoribonuclease YbeY (163 aa).

Residues His-129, His-133, and His-139 each contribute to the Zn(2+) site.

The protein belongs to the endoribonuclease YbeY family. Requires Zn(2+) as cofactor.

The protein resides in the cytoplasm. Functionally, single strand-specific metallo-endoribonuclease involved in late-stage 70S ribosome quality control and in maturation of the 3' terminus of the 16S rRNA. This Picosynechococcus sp. (strain ATCC 27264 / PCC 7002 / PR-6) (Agmenellum quadruplicatum) protein is Endoribonuclease YbeY.